Here is a 435-residue protein sequence, read N- to C-terminus: Zinc finger CCCH domain-containing protein 10 (435 aa).

Residues 1-36 (MPDRDSYANGTGSSGGGPGGGGSEEASGAGTGSGGA) are disordered. Residues 12–35 (GSSGGGPGGGGSEEASGAGTGSGG) show a composition bias toward gly residues. 3 C3H1-type zinc fingers span residues 36-63 (ATSD…HPDM), 73-99 (KNEF…HGSK), and 134-161 (KEEV…HLQR). The disordered stretch occupies residues 166-190 (DARGGGGTGGGGSTGSAPPGRRHDL). The segment covering 168-179 (RGGGGTGGGGST) has biased composition (gly residues). Omega-N-methylarginine occurs at positions 186 and 187. Residues 235-281 (GVECRLLEEENALLRKRVEELKKQVSNLLATNEVLLEQNAQFRNQAK) adopt a coiled-coil conformation. The span at 315–331 (TTLSSQALQPRPVSQQE) shows a compositional bias: polar residues. Residues 315 to 363 (TTLSSQALQPRPVSQQELVAPTGAPAAPPTNAAPPAAPPPPPPHLNPEI) are disordered. Pro residues predominate over residues 340-359 (AAPPTNAAPPAAPPPPPPHL).

The protein localises to the nucleus. Functionally, specific regulator of miRNA biogenesis. Binds, via the C3H1-type zinc finger domains, to the binding motif 5'-GCAGCGC-3' on microRNA pri-MIR143 and negatively regulates the processing to mature microRNA. The chain is Zinc finger CCCH domain-containing protein 10 (Zc3h10) from Mus musculus (Mouse).